The primary structure comprises 216 residues: Uracil phosphoribosyltransferase (216 aa).

GTP contacts are provided by residues Arg32, Arg41, 75–78, and Lys77; that span reads LGKI. Arg85 is a binding site for 5-phospho-alpha-D-ribose 1-diphosphate. Arg102 contributes to the GTP binding site. Arg110 serves as a coordination point for 5-phospho-alpha-D-ribose 1-diphosphate. GTP is bound at residue Arg131. Residues Asp137 and 137 to 145 each bind 5-phospho-alpha-D-ribose 1-diphosphate; that span reads DPMLATGGS. Tyr201 serves as a coordination point for D-ribose 5-phosphate. Residues Leu202 and 207 to 209 each bind uracil; that span reads GDF. Asp208 lines the 5-phospho-alpha-D-ribose 1-diphosphate pocket.

This sequence belongs to the UPRTase family. Mg(2+) serves as cofactor.

It carries out the reaction UMP + diphosphate = 5-phospho-alpha-D-ribose 1-diphosphate + uracil. It functions in the pathway pyrimidine metabolism; UMP biosynthesis via salvage pathway; UMP from uracil: step 1/1. With respect to regulation, allosterically activated by GTP. Catalyzes the conversion of uracil and 5-phospho-alpha-D-ribose 1-diphosphate (PRPP) to UMP and diphosphate. The sequence is that of Uracil phosphoribosyltransferase (FUR1) from Lachancea kluyveri (Yeast).